We begin with the raw amino-acid sequence, 885 residues long: DNA mismatch repair protein MutS (885 aa).

626-633 (GPNMGGKS) contributes to the ATP binding site.

The protein belongs to the DNA mismatch repair MutS family.

Functionally, this protein is involved in the repair of mismatches in DNA. It is possible that it carries out the mismatch recognition step. This protein has a weak ATPase activity. The polypeptide is DNA mismatch repair protein MutS (Burkholderia ambifaria (strain MC40-6)).